The primary structure comprises 623 residues: Interleukin-27 receptor subunit alpha (623 aa).

Residues M1–G24 form the signal peptide. Residues T25–K510 are Extracellular-facing. Fibronectin type-III domains lie at S30–D124 and T125–L225. N-linked (GlcNAc...) asparagine glycosylation occurs at N46. The WSXWS motif motif lies at W211–S215. N-linked (GlcNAc...) asparagine glycosylation is found at N296, N305, N360, N368, and N461. Fibronectin type-III domains are found at residues A316–A412 and G413–N505. Residues A511–A531 form a helical membrane-spanning segment. Residues S532–V623 lie on the Cytoplasmic side of the membrane. The short motif at I552–A560 is the Box 1 motif element.

It belongs to the type I cytokine receptor family. Type 2 subfamily. Expressed in CD4+ and CD8+ T-cells, B-cells, natural killer cells and macrophages. Highest levels in CD4+ T-cells and natural killer cells. Expression highest in Th0 cells.

It localises to the membrane. Its function is as follows. Receptor for IL27. Requires IL6ST/GP130 to mediate signal transduction in response to IL27. This signaling system acts through STAT3 and STAT1. Involved in the regulation of Th1-type immune responses. Also appears to be involved in innate defense mechanisms. In Mus musculus (Mouse), this protein is Interleukin-27 receptor subunit alpha (Il27ra).